The chain runs to 459 residues: tRNA uridine(34) acetyltransferase (459 aa).

Positions 1–278 are radical S-adenosyl-L-methionine (rSAM); it reads MKKLSRTISG…VPPYVRISRV (278 aa). The region spanning 6 to 271 is the Radical SAM core domain; the sequence is RTISGVTPVA…IADIKALVPP (266 aa). Residues cysteine 23, cysteine 27, and cysteine 30 each coordinate [4Fe-4S] cluster. Lysine 77 lines the acetyl-CoA pocket. Residues 308–459 are N-acetyltransferase; that stretch reads QKCRCIRCRE…VAGYMCKHLD (152 aa). Zn(2+)-binding residues include cysteine 310, cysteine 312, and cysteine 315. Residues 386-389, 409-411, and tyrosine 442 contribute to the acetyl-CoA site; these read ELHV and LGR.

The protein belongs to the ELP3 family. In terms of assembly, homodimer. [4Fe-4S] cluster serves as cofactor.

The enzyme catalyses uridine(34) in tRNA + acetyl-CoA + S-adenosyl-L-methionine + H2O = 5-(carboxymethyl)uridine(34) in tRNA + 5'-deoxyadenosine + L-methionine + CoA + 2 H(+). The protein operates within tRNA modification. In terms of biological role, tRNA uridine(34) acetyltransferase, which mediates formation of carboxymethyluridine in the wobble base at position 34 in tRNAs. The proposed mechanism is the following: (i) recruits S-adenosyl-L-methionine and cleaves it to generate a 5'-deoxyadenosine radical (5'-dA) in the radical S-adenosyl-L-methionine (rSAM) region, (ii) hydrolyzes acetyl-CoA in the N-acetyltransferase domain and (iii) an acetyl radical is formed by the products of the two domains and (iv) is transferred onto the C5 position of uridine(34) in the bound tRNA molecule. Does not show protein lysine acetyltransferase activity. This is tRNA uridine(34) acetyltransferase from Dehalococcoides mccartyi (strain CBDB1).